Reading from the N-terminus, the 357-residue chain is DNA replication and repair protein RecF (357 aa).

30-37 (GANGSGKT) is an ATP binding site.

The protein belongs to the RecF family.

It is found in the cytoplasm. In terms of biological role, the RecF protein is involved in DNA metabolism; it is required for DNA replication and normal SOS inducibility. RecF binds preferentially to single-stranded, linear DNA. It also seems to bind ATP. This Escherichia coli O6:K15:H31 (strain 536 / UPEC) protein is DNA replication and repair protein RecF.